The chain runs to 243 residues: Phosphate-specific transport system accessory protein PhoU (243 aa).

It belongs to the PhoU family. As to quaternary structure, homodimer. Interacts with phosphate regulon transcriptional regulatory protein PhoB and ferric uptake regulation protein Fur.

The protein localises to the cytoplasm. In terms of biological role, part of the phosphate (Pho) regulon, which plays a key role in phosphate homeostasis. Encoded together with proteins of the phosphate-specific transport (Pst) system in the polycistronic pstSCAB-phoU operon. PhoU is essential for the repression of the Pho regulon at high phosphate conditions. In this role, it may bind, possibly as a chaperone, to PhoR, PhoB or a PhoR-PhoB complex to promote dephosphorylation of phospho-PhoB, or inhibit formation of the PhoR-PhoB transitory complex. This is Phosphate-specific transport system accessory protein PhoU from Edwardsiella tarda.